The primary structure comprises 130 residues: C-X-C motif chemokine 5 (130 aa).

A signal peptide spans 1–37; sequence MSFQLRSSARIPSRSCSSFTLLAFLLLFTLPQHRAQA. 2 disulfides stabilise this stretch: Cys50/Cys76 and Cys52/Cys93.

It belongs to the intercrine alpha (chemokine CxC) family. As to quaternary structure, monomer. Homodimer.

Its subcellular location is the secreted. May participate in the recruitment of inflammatory cells by injured or infected tissue. This is C-X-C motif chemokine 5 (Cxcl5) from Rattus norvegicus (Rat).